A 1690-amino-acid polypeptide reads, in one-letter code: MSDDTSASGGTSAPFPSPVTADPEPGATASKLPGPIRSNIPTPATSGTGIPQPSKMKAPSSFGSTGSVSKIGRPCCNHTTPKSGPPPREATSMSRESDDNLSSINSAYTDNSSAVLTANTEQFIIGQRVWLGGTRPGQIAFIGDTHFAAGEWAGVVLDEPNGKNDGCVSGKRYFQCEPKRGIFSRLTRLTTYPLAGAQTPTSPLAKSSPDRSRTVSPTASIRSSMLRSPGIGGKNGMAVGDRVIVSSGFGSRPGILRYLGETQFAPGNWCGVELDEPSGKNDGTVDDIRYFECKPKYGVFVPIAKVSLSPSSKKTRLSRTGSRESLTSIGTMNSIATTATSRMRMNAQQRKSSTPVKPILATPKSQFSMQDLLREKQQHVEKLMVERDLDREDAQNQALQLQKNINELKARIVELESALDNERKKTEELQCSIDEAQFCGDELNAQSQVYKEKIHDLESKITKLVSATPSLQSILPPDLPSDDGALQEEIAKLQEKMTIQQKEVESRIAEQLEEEQRLRENVKYLNEQIATLQSELVSKDEALEKFSLSECGIENLRRELELLKEENEKQAQEAQAEFTRKLAEKSVEVLRLSSELQNLKATSDSLESERVNKTDECEILQTEVRMRDEQIRELNQQLDEVTTQLNVQKADSSALDDMLRLQKEGTEEKSTLLEKTEKELVQSKEQAAKTLNDKEQLEKQISDLKQLAEQEKLVREMTENAINQIQLEKESIEQQLALKQNELEDFQKKQSESEVHLQEIKAQNTQKDFELVESGESLKKLQQQLEQKTLGHEKLQAALEELKKEKETIIKEKEQELQQLQSKSAESESALKVVQVQLEQLQQQAAASGEEGSKTVAKLHDEISQLKSQAEETQSELKSTQSNLEAKSKQLEAANGSLEEEAKKSGHLLEQITKLKSEVGETQAALSSCHTDVESKTKQLEAANAALEKVNKEYAESRAEASDLQDKVKEITDTLHAELQAERSSSSALHTKLSKFSDEIATGHKELTSKADAWSQEMLQKEKELQELRQQLQDSQDSQTKLKAEGERKEKSFEESIKNLQEEVTKAKTENLELSTGTQTTIKDLQERLEITNAELQHKEKMASEDAQKIADLKTLVEAIQVANANISATNAELSTVLEVLQAEKSETNHIFELFEMEADMNSERLIEKVTGIKEELKETHLQLDERQKKFEELEEKLKQAQQSEQKLQQESQTSKEKLTEIQQSLQELQDSVKQKEELVQNLEEKVRESSSIIEAQNTKLNESNVQLENKTSCLKETQDQLLESQKKEKQLQEEAAKLSGELQQVQEANGDIKDSLVKVEELVKVLEEKLQAATSQLDAQQATNKELQELLVKSQENEGNLQGESLAVTEKLQQLEQANGELKEALCQKENGLKELQGKLDESNTVLESQKKSHNEIQDKLEQAQQKERTLQEETSKLAEQLSQLKQANEELQKSLQQKQLLLEKGNEFDTQLAEYQKVIDEMDDAASVKSALLEQLQNRVAELETALRQANDAQKTAYLETKELRRQLESLELEKSREVLSLKAQMNGASSRSGKGDEVESLDIETSLAKINFLNSIIADMQQKNDALKAKVQTLETLPMDFTKPHAFDALTKRKPAPRLFCDICDEFDQHDTEDCPIQGSEDQDYSTPSSESNNNEKERKLPAPRKYCDSCEVFGHDTSECADDETY.

2 stretches are compositionally biased toward polar residues: residues 1-11 (MSDDTSASGGT) and 39-51 (NIPT…TGIP). The interval 1–105 (MSDDTSASGG…ESDDNLSSIN (105 aa)) is disordered. Ser64 and Ser67 each carry phosphoserine. The CAP-Gly 1 domain occupies 143–185 (GDTHFAAGEWAGVVLDEPNGKNDGCVSGKRYFQCEPKRGIFSR). Residues 195–227 (AGAQTPTSPLAKSSPDRSRTVSPTASIRSSMLR) form a disordered region. Over residues 214–226 (TVSPTASIRSSML) the composition is skewed to polar residues. Phosphoserine is present on Ser216. The CAP-Gly 2 domain occupies 260–302 (GETQFAPGNWCGVELDEPSGKNDGTVDDIRYFECKPKYGVFVP). Residues Ser309, Ser322, and Ser325 each carry the phosphoserine modification. Phosphothreonine is present on Thr327. Ser328 is subject to Phosphoserine. Thr362 carries the post-translational modification Phosphothreonine. 7 coiled-coil regions span residues 378-468 (QHVE…VSAT), 484-660 (GALQ…DMLR), 667-916 (EEKS…TKLK), 926-981 (LSSC…ELQA), 1001-1121 (ATGH…EAIQ), 1158-1549 (EADM…AQMN), and 1565-1600 (DIET…LETL). The interval 843 to 905 (QQAAASGEEG…GSLEEEAKKS (63 aa)) is disordered. The segment covering 865–885 (QLKSQAEETQSELKSTQSNLE) has biased composition (polar residues). Disordered stretches follow at residues 1031–1052 (QLQD…KEKS) and 1400–1419 (KLDE…NEIQ). Composition is skewed to basic and acidic residues over residues 1040 to 1052 (TKLK…KEKS) and 1410 to 1419 (SQKKSHNEIQ). The disordered stretch occupies residues 1635–1665 (TEDCPIQGSEDQDYSTPSSESNNNEKERKLP). At Thr1681 the chain carries Phosphothreonine. Residue Ser1682 is modified to Phosphoserine.

As to quaternary structure, interacts with Lva. Specifically expressed at the tip of the furrow in cellularizing blastoderms. CLIP-190 and jar are coexpressed at several times in development and in a number of tissues, including embryonic axonal neuron processes and posterior pole.

Its subcellular location is the cytoplasm. The protein localises to the cytoskeleton. It localises to the golgi apparatus. The protein resides in the microtubule organizing center. It is found in the perinuclear region. Its function is as follows. Together CLIP-190 and jar may coordinate the interaction between the actin and microtubule cytoskeleton. May link endocytic vesicles to microtubules. May play a role in formation of furrows during cellularization. The sequence is that of Restin homolog (CLIP-190) from Drosophila melanogaster (Fruit fly).